Here is a 225-residue protein sequence, read N- to C-terminus: UPF0173 metal-dependent hydrolase Pisl_0803 (225 aa).

Belongs to the UPF0173 family.

The sequence is that of UPF0173 metal-dependent hydrolase Pisl_0803 from Pyrobaculum islandicum (strain DSM 4184 / JCM 9189 / GEO3).